The primary structure comprises 111 residues: Colicin-Ia immunity protein (111 aa).

The next 2 helical transmembrane spans lie at 33–53 (LLFW…KWYI) and 85–105 (TGTV…SVII).

It is found in the cell membrane. Its function is as follows. This protein is able to protect a cell, which harbors the plasmid ColIa-CA53 encoding colicin Ia, against colicin Ia. In Escherichia coli, this protein is Colicin-Ia immunity protein.